A 206-amino-acid chain; its full sequence is Thiamine-phosphate synthase (206 aa).

Residues 35-39 (QLRDK) and Asn67 each bind 4-amino-2-methyl-5-(diphosphooxymethyl)pyrimidine. 2 residues coordinate Mg(2+): Asp68 and Asp87. Position 106 (Ser106) interacts with 4-amino-2-methyl-5-(diphosphooxymethyl)pyrimidine. 132 to 134 (TGT) serves as a coordination point for 2-[(2R,5Z)-2-carboxy-4-methylthiazol-5(2H)-ylidene]ethyl phosphate. Lys135 serves as a coordination point for 4-amino-2-methyl-5-(diphosphooxymethyl)pyrimidine. Residues Gly163 and 183 to 184 (IS) contribute to the 2-[(2R,5Z)-2-carboxy-4-methylthiazol-5(2H)-ylidene]ethyl phosphate site.

It belongs to the thiamine-phosphate synthase family. Mg(2+) is required as a cofactor.

It carries out the reaction 2-[(2R,5Z)-2-carboxy-4-methylthiazol-5(2H)-ylidene]ethyl phosphate + 4-amino-2-methyl-5-(diphosphooxymethyl)pyrimidine + 2 H(+) = thiamine phosphate + CO2 + diphosphate. It catalyses the reaction 2-(2-carboxy-4-methylthiazol-5-yl)ethyl phosphate + 4-amino-2-methyl-5-(diphosphooxymethyl)pyrimidine + 2 H(+) = thiamine phosphate + CO2 + diphosphate. The catalysed reaction is 4-methyl-5-(2-phosphooxyethyl)-thiazole + 4-amino-2-methyl-5-(diphosphooxymethyl)pyrimidine + H(+) = thiamine phosphate + diphosphate. It functions in the pathway cofactor biosynthesis; thiamine diphosphate biosynthesis; thiamine phosphate from 4-amino-2-methyl-5-diphosphomethylpyrimidine and 4-methyl-5-(2-phosphoethyl)-thiazole: step 1/1. In terms of biological role, condenses 4-methyl-5-(beta-hydroxyethyl)thiazole monophosphate (THZ-P) and 2-methyl-4-amino-5-hydroxymethyl pyrimidine pyrophosphate (HMP-PP) to form thiamine monophosphate (TMP). The protein is Thiamine-phosphate synthase of Methanospirillum hungatei JF-1 (strain ATCC 27890 / DSM 864 / NBRC 100397 / JF-1).